We begin with the raw amino-acid sequence, 429 residues long: Serine--tRNA ligase (429 aa).

An L-serine-binding site is contributed by 236–238 (TAE). 267 to 269 (RSE) is an ATP binding site. Glu-290 lines the L-serine pocket. 354–357 (EISS) contributes to the ATP binding site. Residue Ser-390 coordinates L-serine.

Belongs to the class-II aminoacyl-tRNA synthetase family. Type-1 seryl-tRNA synthetase subfamily. As to quaternary structure, homodimer. The tRNA molecule binds across the dimer.

The protein localises to the cytoplasm. The catalysed reaction is tRNA(Ser) + L-serine + ATP = L-seryl-tRNA(Ser) + AMP + diphosphate + H(+). It carries out the reaction tRNA(Sec) + L-serine + ATP = L-seryl-tRNA(Sec) + AMP + diphosphate + H(+). Its pathway is aminoacyl-tRNA biosynthesis; selenocysteinyl-tRNA(Sec) biosynthesis; L-seryl-tRNA(Sec) from L-serine and tRNA(Sec): step 1/1. Catalyzes the attachment of serine to tRNA(Ser). Is also able to aminoacylate tRNA(Sec) with serine, to form the misacylated tRNA L-seryl-tRNA(Sec), which will be further converted into selenocysteinyl-tRNA(Sec). The sequence is that of Serine--tRNA ligase from Alcanivorax borkumensis (strain ATCC 700651 / DSM 11573 / NCIMB 13689 / SK2).